A 351-amino-acid polypeptide reads, in one-letter code: Nuclear inhibitor of protein phosphatase 1 (351 aa).

Positions 1–142 are interaction with CDC5L, SF3B1 and MELK; it reads MAAAVNSGSS…LPSAVKGDEK (142 aa). The 53-residue stretch at 49-101 folds into the FHA domain; that stretch reads YLFGRNPDLCDFTIDHQSCSRVHAALVYHKHLKRVFLIDLNSTHGTFLGHIRL. Residues 143-224 are interaction with EED; the sequence is MGGEDDELKG…VDPSVGRFRN (82 aa). Phosphothreonine is present on T161. S178 and S199 each carry phosphoserine. 2 consecutive short sequence motifs (nuclear localization signal) follow at residues 185-209 and 210-240; these read GNLD…DDEI and INPE…RMEG. The involved in PP-1 inhibition stretch occupies residues 191 to 200; the sequence is RPKRKRKNSR. An involved in PP-1 binding region spans residues 200 to 203; sequence RVTF. At S204 the chain carries Phosphoserine. Phosphoserine is present on S249. Y264 is subject to Phosphotyrosine. Residues 310 to 329 are interaction with EED; the sequence is AVAINPTPNPAVYNPEAVNE. The disordered stretch occupies residues 314 to 351; the sequence is NPTPNPAVYNPEAVNEPKKKKYAKEAWPGKKPTPSLLI. An RNA-binding region spans residues 330 to 351; sequence PKKKKYAKEAWPGKKPTPSLLI. Positions 331-337 are involved in PP-1 inhibition; it reads KKKKYAK. Position 335 is a phosphotyrosine (Y335).

Interacts with phosphorylated CDC5L, SF3B1 and MELK. Part of the spliceosome. Interacts with PPP1CA, PPP1CB and PPP1CC. Interacts with EED. Part of a complex consisting of PPP1R8, EED, HDAC2 and PP-1. Post-translationally, may be inactivated by phosphorylation on Ser-199 or Ser-204.

It is found in the nucleus. The protein localises to the nucleus speckle. Functionally, inhibitor subunit of the major nuclear protein phosphatase-1 (PP-1). It has RNA-binding activity but does not cleave RNA and may target PP-1 to RNA-associated substrates. May also be involved in pre-mRNA splicing. Binds DNA and might act as a transcriptional repressor. Essential for cell proliferation and early embryonic development. This Mus musculus (Mouse) protein is Nuclear inhibitor of protein phosphatase 1 (Ppp1r8).